The chain runs to 100 residues: uncharacterized protein (100 aa).

This is an uncharacterized protein from Schizosaccharomyces pombe (strain 972 / ATCC 24843) (Fission yeast).